The sequence spans 1194 residues: Chitin synthase C (1194 aa).

Disordered stretches follow at residues 1–91 (MSLP…PNYL) and 136–177 (GAHG…RRKA). Residues 12-23 (PRREETSAFREP) are compositionally biased toward basic and acidic residues. Basic residues predominate over residues 42 to 54 (PRHHRHHRSHSSR). 2 stretches are compositionally biased toward basic and acidic residues: residues 55–69 (HQHDIDEERAEEGGI) and 76–85 (VKPERGRMDP). The span at 150–164 (TRHRSKKRKGSRKIS) shows a compositional bias: basic residues. A helical transmembrane segment spans residues 221-241 (IGLISIILMIAAFVGFLTFGF). N-linked (GlcNAc...) asparagine glycans are attached at residues N351 and N390. Residues 476–496 (YVSLIFILSIVIVKFAFALLF) form a helical membrane-spanning segment. N-linked (GlcNAc...) asparagine glycosylation is found at N582, N608, N885, and N1014. The next 3 helical transmembrane spans lie at 1039–1059 (FVIFVELVGTVVLPAAISFTI), 1073–1093 (IIPLVLLALILGLPGVLVVVT), and 1097–1117 (LVYVLWMLVYLISLPIWNFVL).

It belongs to the chitin synthase family. Class V subfamily.

The protein resides in the cell membrane. The enzyme catalyses [(1-&gt;4)-N-acetyl-beta-D-glucosaminyl](n) + UDP-N-acetyl-alpha-D-glucosamine = [(1-&gt;4)-N-acetyl-beta-D-glucosaminyl](n+1) + UDP + H(+). Polymerizes chitin, a structural polymer of the cell wall and septum, by transferring the sugar moiety of UDP-GlcNAc to the non-reducing end of the growing chitin polymer. Responsible for synthesis of 30-40% of the chitin in the cells. ChsA and chsD play redundant functions in conidia formation. The chitin synthesized by the chsD-encoded isozyme contributes to the rigidity of the walls of germinating conidia, of the subapical region of hyphae, and of conidiophore vesicles, but is not necessary for normal morphology of these cells. The chain is Chitin synthase C from Emericella nidulans (strain FGSC A4 / ATCC 38163 / CBS 112.46 / NRRL 194 / M139) (Aspergillus nidulans).